We begin with the raw amino-acid sequence, 463 residues long: RuvB-like 2 (463 aa).

77–84 (GQPGTGKT) contributes to the ATP binding site.

This sequence belongs to the RuvB family. Forms homohexameric rings. Can form a dodecamer with ruvbl1 made of two stacked hexameric rings. Component of the chromatin-remodeling Ino80 complex. Component of some MLL1/MLL complex.

It is found in the nucleus. The protein localises to the dynein axonemal particle. It catalyses the reaction ATP + H2O = ADP + phosphate + H(+). Has double-stranded DNA-stimulated ATPase activity. Has ATP-dependent DNA helicase (5' to 3') activity suggesting a role in nuclear processes such as recombination and transcription. Represses gene activation mediated by beta-catenin. Proposed core component of the chromatin remodeling Ino80 complex which exhibits DNA- and nucleosome-activated ATPase activity and catalyzes ATP-dependent nucleosome sliding. Involved in the endoplasmic reticulum (ER)-associated degradation (ERAD) pathway where it negatively regulates expression of ER stress response genes. May act as a regulator of embryonic heart growth. The chain is RuvB-like 2 (ruvbl2) from Danio rerio (Zebrafish).